The sequence spans 1019 residues: StAR-related lipid transfer protein 8 (1019 aa).

Disordered regions lie at residues Q92–K122 and S134–T154. Over residues S100 to G115 the composition is skewed to polar residues. S108 is modified (phosphoserine). Basic and acidic residues predominate over residues S134–E147. An Asymmetric dimethylarginine modification is found at R168. 2 positions are modified to phosphoserine: S234 and S237. Disordered regions lie at residues M325–T355 and A406–S482. The segment covering K334 to A347 has biased composition (acidic residues). 2 stretches are compositionally biased toward polar residues: residues N418–S430 and I437–N455. Phosphoserine is present on residues S494 and S502. In terms of domain architecture, Rho-GAP spans P569–F773. The segment at D731–E754 is disordered. The 209-residue stretch at A805–A1013 folds into the START domain.

Binds both the SH2 and PTB domains of TNS1.

It localises to the cell junction. The protein resides in the focal adhesion. In terms of biological role, accelerates GTPase activity of RHOA and CDC42, but not RAC1. Stimulates the hydrolysis of phosphatidylinositol 4,5-bisphosphate by PLCD1. This is StAR-related lipid transfer protein 8 (Stard8) from Mus musculus (Mouse).